Reading from the N-terminus, the 704-residue chain is Polyribonucleotide nucleotidyltransferase (704 aa).

The Mg(2+) site is built by aspartate 485 and aspartate 491. Positions 552–611 (PKILTMTINPDKIRDVIGPSGKMINKIIEDTGVKIDIEQDGTIYISSADTNMNNKAREII) constitute a KH domain. The S1 motif domain maps to 621-689 (GQMYLGTVKR…NQGRVNLSRK (69 aa)).

The protein belongs to the polyribonucleotide nucleotidyltransferase family. The cofactor is Mg(2+).

It is found in the cytoplasm. The catalysed reaction is RNA(n+1) + phosphate = RNA(n) + a ribonucleoside 5'-diphosphate. Functionally, involved in mRNA degradation. Catalyzes the phosphorolysis of single-stranded polyribonucleotides processively in the 3'- to 5'-direction. The sequence is that of Polyribonucleotide nucleotidyltransferase from Halalkalibacterium halodurans (strain ATCC BAA-125 / DSM 18197 / FERM 7344 / JCM 9153 / C-125) (Bacillus halodurans).